Consider the following 446-residue polypeptide: Tryptophan synthase beta chain 2 (446 aa).

Lys-110 is modified (N6-(pyridoxal phosphate)lysine).

This sequence belongs to the TrpB family. As to quaternary structure, tetramer of two alpha and two beta chains. Requires pyridoxal 5'-phosphate as cofactor.

It carries out the reaction (1S,2R)-1-C-(indol-3-yl)glycerol 3-phosphate + L-serine = D-glyceraldehyde 3-phosphate + L-tryptophan + H2O. Its pathway is amino-acid biosynthesis; L-tryptophan biosynthesis; L-tryptophan from chorismate: step 5/5. The beta subunit is responsible for the synthesis of L-tryptophan from indole and L-serine. The sequence is that of Tryptophan synthase beta chain 2 (trpB2) from Pyrococcus furiosus (strain ATCC 43587 / DSM 3638 / JCM 8422 / Vc1).